The following is a 483-amino-acid chain: Aspartyl/glutamyl-tRNA(Asn/Gln) amidotransferase subunit B (483 aa).

This sequence belongs to the GatB/GatE family. GatB subfamily. In terms of assembly, heterotrimer of A, B and C subunits.

The catalysed reaction is L-glutamyl-tRNA(Gln) + L-glutamine + ATP + H2O = L-glutaminyl-tRNA(Gln) + L-glutamate + ADP + phosphate + H(+). The enzyme catalyses L-aspartyl-tRNA(Asn) + L-glutamine + ATP + H2O = L-asparaginyl-tRNA(Asn) + L-glutamate + ADP + phosphate + 2 H(+). Functionally, allows the formation of correctly charged Asn-tRNA(Asn) or Gln-tRNA(Gln) through the transamidation of misacylated Asp-tRNA(Asn) or Glu-tRNA(Gln) in organisms which lack either or both of asparaginyl-tRNA or glutaminyl-tRNA synthetases. The reaction takes place in the presence of glutamine and ATP through an activated phospho-Asp-tRNA(Asn) or phospho-Glu-tRNA(Gln). This Roseiflexus castenholzii (strain DSM 13941 / HLO8) protein is Aspartyl/glutamyl-tRNA(Asn/Gln) amidotransferase subunit B.